The chain runs to 348 residues: N-acetyl-gamma-glutamyl-phosphate reductase (348 aa).

C149 is a catalytic residue.

This sequence belongs to the NAGSA dehydrogenase family. Type 1 subfamily.

The protein localises to the cytoplasm. It catalyses the reaction N-acetyl-L-glutamate 5-semialdehyde + phosphate + NADP(+) = N-acetyl-L-glutamyl 5-phosphate + NADPH + H(+). It participates in amino-acid biosynthesis; L-arginine biosynthesis; N(2)-acetyl-L-ornithine from L-glutamate: step 3/4. Catalyzes the NADPH-dependent reduction of N-acetyl-5-glutamyl phosphate to yield N-acetyl-L-glutamate 5-semialdehyde. This Cellvibrio japonicus (strain Ueda107) (Pseudomonas fluorescens subsp. cellulosa) protein is N-acetyl-gamma-glutamyl-phosphate reductase.